Here is a 265-residue protein sequence, read N- to C-terminus: Chlorophyll a-b binding protein 1C, chloroplastic (265 aa).

Residues 1-34 constitute a chloroplast transit peptide; it reads MAAATMALSSPSFAGQAVKLSPSASEISGNGRIT. The chain crosses the membrane as a helical span at residues 151–171; the sequence is LVHAQSILAIWACQVVLMGAV. Chlorophyll b is bound by residues V152, S156, Q164, E172, R175, and L181. The chlorophyll a site is built by K212, E213, N216, R218, Q230, H245, and A254. Residues 219–239 form a helical membrane-spanning segment; that stretch reads LAMFSMFGFFVQAIVTGKGPL. Residue F261 coordinates chlorophyll b.

This sequence belongs to the light-harvesting chlorophyll a/b-binding (LHC) protein family. In terms of assembly, the LHC complex consists of chlorophyll a-b binding proteins. Binds at least 14 chlorophylls (8 Chl-a and 6 Chl-b) and carotenoids such as lutein and neoxanthin. is required as a cofactor. Post-translationally, photoregulated by reversible phosphorylation of its threonine residues.

It is found in the plastid. The protein resides in the chloroplast thylakoid membrane. Its function is as follows. The light-harvesting complex (LHC) functions as a light receptor, it captures and delivers excitation energy to photosystems with which it is closely associated. The chain is Chlorophyll a-b binding protein 1C, chloroplastic (CAB1C) from Solanum lycopersicum (Tomato).